We begin with the raw amino-acid sequence, 455 residues long: UPF0053 protein MT1890 (455 aa).

Residues 2-205 (NLTDTVATIL…ARSGALDDAT (204 aa)) enclose the CNNM transmembrane domain. The next 4 helical transmembrane spans lie at 6 to 26 (TVATILAILALTAGTGVFVAA), 68 to 88 (LGISITTLATGYLTEPLVAEL), 106 to 126 (LITFFALVIVTSLSMVFGELV), and 148 to 168 (LFSLLLTPAIRLTNGAANWIV). CBS domains follow at residues 224-285 (MTPR…AHTL) and 286-346 (LTTV…VRDE).

Belongs to the UPF0053 family.

Its subcellular location is the cell membrane. The chain is UPF0053 protein MT1890 from Mycobacterium tuberculosis (strain CDC 1551 / Oshkosh).